Consider the following 257-residue polypeptide: Imidazole glycerol phosphate synthase subunit HisF (257 aa).

Catalysis depends on residues D12 and D131.

The protein belongs to the HisA/HisF family. In terms of assembly, heterodimer of HisH and HisF.

Its subcellular location is the cytoplasm. The enzyme catalyses 5-[(5-phospho-1-deoxy-D-ribulos-1-ylimino)methylamino]-1-(5-phospho-beta-D-ribosyl)imidazole-4-carboxamide + L-glutamine = D-erythro-1-(imidazol-4-yl)glycerol 3-phosphate + 5-amino-1-(5-phospho-beta-D-ribosyl)imidazole-4-carboxamide + L-glutamate + H(+). The protein operates within amino-acid biosynthesis; L-histidine biosynthesis; L-histidine from 5-phospho-alpha-D-ribose 1-diphosphate: step 5/9. IGPS catalyzes the conversion of PRFAR and glutamine to IGP, AICAR and glutamate. The HisF subunit catalyzes the cyclization activity that produces IGP and AICAR from PRFAR using the ammonia provided by the HisH subunit. This Burkholderia multivorans (strain ATCC 17616 / 249) protein is Imidazole glycerol phosphate synthase subunit HisF.